Here is a 404-residue protein sequence, read N- to C-terminus: Exodeoxyribonuclease 7 large subunit (404 aa).

This sequence belongs to the XseA family. In terms of assembly, heterooligomer composed of large and small subunits.

The protein resides in the cytoplasm. The catalysed reaction is Exonucleolytic cleavage in either 5'- to 3'- or 3'- to 5'-direction to yield nucleoside 5'-phosphates.. In terms of biological role, bidirectionally degrades single-stranded DNA into large acid-insoluble oligonucleotides, which are then degraded further into small acid-soluble oligonucleotides. The protein is Exodeoxyribonuclease 7 large subunit of Caldanaerobacter subterraneus subsp. tengcongensis (strain DSM 15242 / JCM 11007 / NBRC 100824 / MB4) (Thermoanaerobacter tengcongensis).